Consider the following 360-residue polypeptide: Phospho-N-acetylmuramoyl-pentapeptide-transferase (360 aa).

10 consecutive transmembrane segments (helical) span residues 25–45 (RAILGVLTALGLSMVLGPWVI), 73–93 (TMGGTLILFSIVTATLLWADL), 97–117 (YVLAVLFVTITFGLIGWVDDY), 132–152 (WKYFWQSACGFIVAIALFVTA), 168–188 (VAWQMGVLYVFVTYLMIVGFS), 199–219 (GLAIMPTVMVGSALGVIAYLV), 236–256 (SGELVVYCAALAGAGLGFLWF), 263–283 (VFMGDVGALALGAALGVIAVI), 288–308 (IVFFIMSGIFVMETVSVILQV), and 339–359 (IVRFWIITVILVLFGLATLKI).

The protein belongs to the glycosyltransferase 4 family. MraY subfamily. Mg(2+) is required as a cofactor.

Its subcellular location is the cell inner membrane. It carries out the reaction UDP-N-acetyl-alpha-D-muramoyl-L-alanyl-gamma-D-glutamyl-meso-2,6-diaminopimeloyl-D-alanyl-D-alanine + di-trans,octa-cis-undecaprenyl phosphate = di-trans,octa-cis-undecaprenyl diphospho-N-acetyl-alpha-D-muramoyl-L-alanyl-D-glutamyl-meso-2,6-diaminopimeloyl-D-alanyl-D-alanine + UMP. It functions in the pathway cell wall biogenesis; peptidoglycan biosynthesis. Functionally, catalyzes the initial step of the lipid cycle reactions in the biosynthesis of the cell wall peptidoglycan: transfers peptidoglycan precursor phospho-MurNAc-pentapeptide from UDP-MurNAc-pentapeptide onto the lipid carrier undecaprenyl phosphate, yielding undecaprenyl-pyrophosphoryl-MurNAc-pentapeptide, known as lipid I. This Teredinibacter turnerae (strain ATCC 39867 / T7901) protein is Phospho-N-acetylmuramoyl-pentapeptide-transferase.